Reading from the N-terminus, the 352-residue chain is MNELELLGPRAYGDALGRAALKATAEDFQVDEVLDIPLSGDGEHLWLWVEKRGLNTVEAARRLARAAGVQLRTVSYAGLKDRQALTRQWFSIQLPGKADPDLSAAQDATLQILKSGRHKRKLQRGAHAANGFTLRLTQLEGDKEALNQRLETIALQGIPNYFGVQRFGYQGGNLGEARDYAGRKALPEQRAVRSRLLSTARSYLFNRVLAARVADGSWQKAQVGDLLAFTDSRSFFPADVDECSDPRLAILDLHPTGPQWGEGPSPAGGATAALENAIANDESVLRDWLVRAGMEHERRILRLPIGRLTWHYPEPDILQLEFVLPPGCFATVLVRELVDLVPVGQTDSPCVF.

Asp-81 functions as the Nucleophile in the catalytic mechanism. The TRUD domain occupies 157-303 (GIPNYFGVQR…MEHERRILRL (147 aa)).

This sequence belongs to the pseudouridine synthase TruD family.

The catalysed reaction is uridine(13) in tRNA = pseudouridine(13) in tRNA. In terms of biological role, responsible for synthesis of pseudouridine from uracil-13 in transfer RNAs. The polypeptide is tRNA pseudouridine synthase D (Pseudomonas syringae pv. tomato (strain ATCC BAA-871 / DC3000)).